The chain runs to 327 residues: Delta-aminolevulinic acid dehydratase (327 aa).

Zn(2+) contacts are provided by Cys119, Cys121, and Cys129. Residue Lys198 is the Schiff-base intermediate with substrate of the active site. 2 residues coordinate 5-aminolevulinate: Arg208 and Arg220. Residue Glu236 participates in Mg(2+) binding. Residue Lys251 is the Schiff-base intermediate with substrate of the active site. Positions 277 and 316 each coordinate 5-aminolevulinate.

It belongs to the ALAD family. As to quaternary structure, homooctamer. Zn(2+) serves as cofactor.

It catalyses the reaction 2 5-aminolevulinate = porphobilinogen + 2 H2O + H(+). The protein operates within porphyrin-containing compound metabolism; protoporphyrin-IX biosynthesis; coproporphyrinogen-III from 5-aminolevulinate: step 1/4. In terms of biological role, catalyzes an early step in the biosynthesis of tetrapyrroles. Binds two molecules of 5-aminolevulinate per subunit, each at a distinct site, and catalyzes their condensation to form porphobilinogen. The chain is Delta-aminolevulinic acid dehydratase (hemB) from Synechocystis sp. (strain ATCC 27184 / PCC 6803 / Kazusa).